A 637-amino-acid polypeptide reads, in one-letter code: Chaperone protein HtpG (637 aa).

The a; substrate-binding stretch occupies residues 1 to 345 (MSHQETHGFQ…SNDLPLNVSR (345 aa)). The interval 346 to 562 (EILQDNKVTR…EGEMSSQMIK (217 aa)) is b. Residues 563–637 (LMQAAGQPVP…VNQMLLKSVG (75 aa)) are c.

This sequence belongs to the heat shock protein 90 family. As to quaternary structure, homodimer.

It localises to the cytoplasm. Its function is as follows. Molecular chaperone. Has ATPase activity. The sequence is that of Chaperone protein HtpG from Shewanella amazonensis (strain ATCC BAA-1098 / SB2B).